A 156-amino-acid polypeptide reads, in one-letter code: Arginine repressor (156 aa).

This sequence belongs to the ArgR family.

It is found in the cytoplasm. The protein operates within amino-acid biosynthesis; L-arginine biosynthesis [regulation]. Its function is as follows. Regulates arginine biosynthesis genes. This chain is Arginine repressor, found in Photorhabdus laumondii subsp. laumondii (strain DSM 15139 / CIP 105565 / TT01) (Photorhabdus luminescens subsp. laumondii).